Here is a 258-residue protein sequence, read N- to C-terminus: MPYERDCLDNDVRLRAQNLRTHEINLAPYVPGATLRADIIAKYPDGRYKVFDFTAPNFIKGVISYKEFAWHYGHTYDNDDQLDDHNANTFNNVTLANSGSTNPPRDITYPETVMIVLNGNFNIAQCRAFPVNQYGLTHKDWRLSRNNSPDPIHNCQWTPIGCYSNFFVMKFNQREGLRFILPACSDSAYNQYNSGTLAEIIWETVKHKTVKWFTGERQAINWFTQKNLAYPDSANFIASRAEANYIGNGNFSDPSRYY.

In terms of assembly, forms crystal-like bodies by self-assembly.

Its function is as follows. Major component of the virus occlusion bodies, which are large proteinaceous structures (polyhedra), that protect the virus from the outside environment for extended periods until they are ingested by insect larvae. This Choristoneura fumiferana cypovirus (CfCPV) protein is Polyhedrin.